Reading from the N-terminus, the 602-residue chain is Glutamyl-tRNA(Gln) amidotransferase subunit B, mitochondrial (602 aa).

The transit peptide at 1–52 directs the protein to the mitochondrion; that stretch reads MLQQWLRQSPAAAGLLRCSRYRGPQAALLQLSPQRAPTYHAIRSLQTSAAES. Residues 61-83 form a disordered region; that stretch reads QLKQGAKGLKAQKRQRRESEEAS.

The protein belongs to the GatB/GatE family. GatB subfamily. In terms of assembly, subunit of the heterotrimeric GatCAB amidotransferase (AdT) complex, composed of A, B and C subunits.

The protein resides in the mitochondrion. The enzyme catalyses L-glutamyl-tRNA(Gln) + L-glutamine + ATP + H2O = L-glutaminyl-tRNA(Gln) + L-glutamate + ADP + phosphate + H(+). In terms of biological role, allows the formation of correctly charged Gln-tRNA(Gln) through the transamidation of misacylated Glu-tRNA(Gln) in the mitochondria. The reaction takes place in the presence of glutamine and ATP through an activated gamma-phospho-Glu-tRNA(Gln). This is Glutamyl-tRNA(Gln) amidotransferase subunit B, mitochondrial from Aspergillus clavatus (strain ATCC 1007 / CBS 513.65 / DSM 816 / NCTC 3887 / NRRL 1 / QM 1276 / 107).